Here is a 279-residue protein sequence, read N- to C-terminus: Putative phosphoenolpyruvate synthase regulatory protein (279 aa).

159–166 (GVSRSGKT) is an ADP binding site.

This sequence belongs to the pyruvate, phosphate/water dikinase regulatory protein family. PSRP subfamily.

It carries out the reaction [pyruvate, water dikinase] + ADP = [pyruvate, water dikinase]-phosphate + AMP + H(+). The enzyme catalyses [pyruvate, water dikinase]-phosphate + phosphate + H(+) = [pyruvate, water dikinase] + diphosphate. In terms of biological role, bifunctional serine/threonine kinase and phosphorylase involved in the regulation of the phosphoenolpyruvate synthase (PEPS) by catalyzing its phosphorylation/dephosphorylation. The protein is Putative phosphoenolpyruvate synthase regulatory protein of Ralstonia nicotianae (strain ATCC BAA-1114 / GMI1000) (Ralstonia solanacearum).